A 154-amino-acid polypeptide reads, in one-letter code: MIEINVYYKKWYNVIRKPKSFVKNIINTSLIDLNIYEYKPIISIVLANNKLLQQLNYEYRKKNKPTNVLSFPYNKLDKNCYLGEIFISLDVLMNESVDLNIPIEHHTSHMLIHGLLHILDYDHEEPLDQYIMESIEIKLLDKLGIKNPYVSRET.

Residues histidine 113, histidine 117, and histidine 123 each coordinate Zn(2+).

Belongs to the endoribonuclease YbeY family. Zn(2+) serves as cofactor.

The protein localises to the cytoplasm. In terms of biological role, single strand-specific metallo-endoribonuclease involved in late-stage 70S ribosome quality control and in maturation of the 3' terminus of the 16S rRNA. This is Endoribonuclease YbeY from Ehrlichia canis (strain Jake).